We begin with the raw amino-acid sequence, 35 residues long: 3-hydroxyisobutyrate dehydrogenase (35 aa).

An NAD(+)-binding site is contributed by 4 to 33; sequence TPVGFIGLGNMGNPMAKNLMKHGYPLIIYD. The residue at position 24 (lysine 24) is an N6-acetyllysine; alternate. The residue at position 24 (lysine 24) is an N6-succinyllysine; alternate.

The protein belongs to the HIBADH-related family. 3-hydroxyisobutyrate dehydrogenase subfamily. In terms of assembly, homodimer.

The protein localises to the mitochondrion. The enzyme catalyses 3-hydroxy-2-methylpropanoate + NAD(+) = 2-methyl-3-oxopropanoate + NADH + H(+). It functions in the pathway amino-acid degradation; L-valine degradation. This is 3-hydroxyisobutyrate dehydrogenase (HIBADH) from Oryctolagus cuniculus (Rabbit).